Consider the following 180-residue polypeptide: MRILGIDPGLRVTGFGVIDVSGHQLAYVASGVIKTPTADLPTRLGTIYDGVSTLIREHTPDQAAIEKVFVNVNPQSTLLLGQARGAAICGLVSGGLPVAEYTALQLKQAVVGYGRATKEQMQEMVAQLLSLSGRPGTDAADALGMAICHAHGGNTLNTLGGIAPALAKKGLRVRRGRLVG.

Active-site residues include D7, E66, and D138. D7, E66, and D138 together coordinate Mg(2+).

This sequence belongs to the RuvC family. Homodimer which binds Holliday junction (HJ) DNA. The HJ becomes 2-fold symmetrical on binding to RuvC with unstacked arms; it has a different conformation from HJ DNA in complex with RuvA. In the full resolvosome a probable DNA-RuvA(4)-RuvB(12)-RuvC(2) complex forms which resolves the HJ. Mg(2+) is required as a cofactor.

It is found in the cytoplasm. It catalyses the reaction Endonucleolytic cleavage at a junction such as a reciprocal single-stranded crossover between two homologous DNA duplexes (Holliday junction).. The RuvA-RuvB-RuvC complex processes Holliday junction (HJ) DNA during genetic recombination and DNA repair. Endonuclease that resolves HJ intermediates. Cleaves cruciform DNA by making single-stranded nicks across the HJ at symmetrical positions within the homologous arms, yielding a 5'-phosphate and a 3'-hydroxyl group; requires a central core of homology in the junction. The consensus cleavage sequence is 5'-(A/T)TT(C/G)-3'. Cleavage occurs on the 3'-side of the TT dinucleotide at the point of strand exchange. HJ branch migration catalyzed by RuvA-RuvB allows RuvC to scan DNA until it finds its consensus sequence, where it cleaves and resolves the cruciform DNA. In Burkholderia pseudomallei (strain 668), this protein is Crossover junction endodeoxyribonuclease RuvC.